A 538-amino-acid chain; its full sequence is Tetracenomycin C resistance and export protein (538 aa).

14 consecutive transmembrane segments (helical) span residues 28–48 (LLAV…VAIA), 65–85 (WITN…GKLG), 100–120 (GFAV…IVVF), 126–146 (LFGA…FPPG), 154–174 (IWSG…GLLV), 181–201 (AVFF…LVIL), 213–233 (FDVS…WGLI), 239–259 (GWGD…FAGF), 286–306 (VLMV…TFYL), 319–339 (VHLL…GIVI), 342–362 (FGPG…LWGM), 371–391 (MGIT…VMVG), 413–433 (QSAM…LMAS), and 494–514 (MGLA…VALF).

Belongs to the major facilitator superfamily. EmrB family.

It is found in the cell membrane. It participates in antibiotic biosynthesis; tetracenomycin C biosynthesis. Functionally, resistance to tetracenomycin C by an active tetracenomycin C efflux system which is probably energized by transmembrane electrochemical gradients. The chain is Tetracenomycin C resistance and export protein (tcmA) from Streptomyces glaucescens.